The chain runs to 363 residues: Chorismate synthase (363 aa).

2 residues coordinate NADP(+): R48 and R54. FMN-binding positions include 131–133 (RSS), 244–245 (NA), G288, 303–307 (KPTSS), and R329.

It belongs to the chorismate synthase family. Homotetramer. It depends on FMNH2 as a cofactor.

It catalyses the reaction 5-O-(1-carboxyvinyl)-3-phosphoshikimate = chorismate + phosphate. The protein operates within metabolic intermediate biosynthesis; chorismate biosynthesis; chorismate from D-erythrose 4-phosphate and phosphoenolpyruvate: step 7/7. Its function is as follows. Catalyzes the anti-1,4-elimination of the C-3 phosphate and the C-6 proR hydrogen from 5-enolpyruvylshikimate-3-phosphate (EPSP) to yield chorismate, which is the branch point compound that serves as the starting substrate for the three terminal pathways of aromatic amino acid biosynthesis. This reaction introduces a second double bond into the aromatic ring system. In Maricaulis maris (strain MCS10) (Caulobacter maris), this protein is Chorismate synthase.